The sequence spans 750 residues: Circadian input-output histidine kinase CikA (750 aa).

The N-terminal domain stretch occupies residues 1–173; the sequence is MLPAFSPIFR…QVIAQIRQSL (173 aa). Residues 174-333 are GAF domain; it reads DLSEILNNAV…KNFLGQIGEH (160 aa). The 225-residue stretch at 385–609 folds into the Histidine kinase domain; it reads NISHELRTPL…IFTTVIPQQN (225 aa). A Phosphohistidine; by autocatalysis modification is found at histidine 388. The interval 604-750 is psR domain, bind KaiB(fs); the sequence is VIPQQNFPPT…VQSIQQEPLR (147 aa). A Response regulatory domain is found at 631–745; that stretch reads SVIVIEQDEE…LLLQRVQSIQ (115 aa). Aspartate 680 bears the 4-aspartylphosphate mark.

It in the N-terminal section; belongs to the phytochrome family. As to quaternary structure, homodimer. Part of the circadian clock (KaiA, KaiB, KaiC, CikA, RpaA, SasA), the composition of which varies during the circadian cycle. KaiA and CikA compete for binding to KaiB(fs). Interacts with RpaA.

It catalyses the reaction ATP + protein L-histidine = ADP + protein N-phospho-L-histidine.. Functions in an input pathway to the Kai circadian clock. Senses oxidized quinones via its C-terminal pseudo-receiver domain, providing a link between cell metabolism and the clock. Affects the ratio of phosphorylated to unphosphorylated KaiC, binds quinones via its pseudo-receptor domain. Quinone-binding destabilizes the protein rapidly. Autophosphorylates, does not transfer the phosphate to its pseudo-receiver (PsR) domain. May play a role in cell division. Functionally, also functions in a two-component CikA/RpaA output pathway from the circadian clock, negatively regulating kaiBC expression independently of labA and of sasA. One of three clock output pathways. Dephosphorylates phospho-RpaA, enhanced by KaiB and KaiC, has only modest kinase activity on RpaA. This Synechocystis sp. (strain ATCC 27184 / PCC 6803 / Kazusa) protein is Circadian input-output histidine kinase CikA.